A 905-amino-acid chain; its full sequence is DNA mismatch repair protein MutS (905 aa).

Residues 388 to 410 (LERPANPEGTYPTDAETSGDTLP) are disordered. 638–645 (GPNMAGKS) is an ATP binding site. Residues 826–847 (RDAARGTNSAPSRQTLPGLDLP) form a disordered region. The span at 831–840 (GTNSAPSRQT) shows a compositional bias: polar residues.

Belongs to the DNA mismatch repair MutS family.

This protein is involved in the repair of mismatches in DNA. It is possible that it carries out the mismatch recognition step. This protein has a weak ATPase activity. The protein is DNA mismatch repair protein MutS of Nitratidesulfovibrio vulgaris (strain DP4) (Desulfovibrio vulgaris).